A 341-amino-acid polypeptide reads, in one-letter code: L-threonine 3-dehydrogenase (341 aa).

A Zn(2+)-binding site is contributed by C38. Catalysis depends on charge relay system residues T40 and H43. Zn(2+) is bound by residues H63, E64, C93, C96, C99, and C107. NAD(+) is bound by residues I175, D195, R200, 262-264 (LGI), and 286-287 (IY).

This sequence belongs to the zinc-containing alcohol dehydrogenase family. As to quaternary structure, homotetramer. Zn(2+) serves as cofactor.

It localises to the cytoplasm. The enzyme catalyses L-threonine + NAD(+) = (2S)-2-amino-3-oxobutanoate + NADH + H(+). It functions in the pathway amino-acid degradation; L-threonine degradation via oxydo-reductase pathway; glycine from L-threonine: step 1/2. Its function is as follows. Catalyzes the NAD(+)-dependent oxidation of L-threonine to 2-amino-3-ketobutyrate. This is L-threonine 3-dehydrogenase from Klebsiella pneumoniae (strain 342).